We begin with the raw amino-acid sequence, 303 residues long: Glutathione transport system permease protein GsiD (303 aa).

6 helical membrane passes run 40-60, 105-125, 144-164, 165-185, 222-242, and 266-286; these read AMTA…ARWI, LAAG…LGLL, LFAF…GSGI, ANVI…LVRG, IVVF…SLSF, and VIAP…VLAF. Positions 101-290 constitute an ABC transmembrane type-1 domain; sequence AQISLAAGVF…LTVLAFNLLG (190 aa).

Belongs to the binding-protein-dependent transport system permease family. The complex is composed of two ATP-binding proteins (GsiA), two transmembrane proteins (GsiC and GsiD) and a solute-binding protein (GsiB).

It localises to the cell inner membrane. Its function is as follows. Part of the ABC transporter complex GsiABCD involved in glutathione import. Probably responsible for the translocation of the substrate across the membrane. The chain is Glutathione transport system permease protein GsiD from Shigella dysenteriae serotype 1 (strain Sd197).